The following is a 212-amino-acid chain: Dephospho-CoA kinase (212 aa).

Residues 3–207 (IIGLTGGIAS…RHLADDPEPG (205 aa)) enclose the DPCK domain. An ATP-binding site is contributed by 11–16 (ASGKST).

This sequence belongs to the CoaE family.

It is found in the cytoplasm. The catalysed reaction is 3'-dephospho-CoA + ATP = ADP + CoA + H(+). It participates in cofactor biosynthesis; coenzyme A biosynthesis; CoA from (R)-pantothenate: step 5/5. In terms of biological role, catalyzes the phosphorylation of the 3'-hydroxyl group of dephosphocoenzyme A to form coenzyme A. The polypeptide is Dephospho-CoA kinase (Moorella thermoacetica (strain ATCC 39073 / JCM 9320)).